Consider the following 485-residue polypeptide: N-succinylglutamate 5-semialdehyde dehydrogenase (485 aa).

NAD(+) is bound at residue 220 to 225 (GSANTG). Residues E243 and C278 contribute to the active site.

Belongs to the aldehyde dehydrogenase family. AstD subfamily.

The catalysed reaction is N-succinyl-L-glutamate 5-semialdehyde + NAD(+) + H2O = N-succinyl-L-glutamate + NADH + 2 H(+). It participates in amino-acid degradation; L-arginine degradation via AST pathway; L-glutamate and succinate from L-arginine: step 4/5. Its function is as follows. Catalyzes the NAD-dependent reduction of succinylglutamate semialdehyde into succinylglutamate. This chain is N-succinylglutamate 5-semialdehyde dehydrogenase, found in Vibrio campbellii (strain ATCC BAA-1116).